Consider the following 457-residue polypeptide: ATP synthase subunit beta (457 aa).

147 to 154 (GGAGVGKT) is an ATP binding site.

The protein belongs to the ATPase alpha/beta chains family. In terms of assembly, F-type ATPases have 2 components, CF(1) - the catalytic core - and CF(0) - the membrane proton channel. CF(1) has five subunits: alpha(3), beta(3), gamma(1), delta(1), epsilon(1). CF(0) has three main subunits: a(1), b(2) and c(9-12). The alpha and beta chains form an alternating ring which encloses part of the gamma chain. CF(1) is attached to CF(0) by a central stalk formed by the gamma and epsilon chains, while a peripheral stalk is formed by the delta and b chains.

It localises to the cell inner membrane. The enzyme catalyses ATP + H2O + 4 H(+)(in) = ADP + phosphate + 5 H(+)(out). Functionally, produces ATP from ADP in the presence of a proton gradient across the membrane. The catalytic sites are hosted primarily by the beta subunits. This chain is ATP synthase subunit beta, found in Histophilus somni (strain 129Pt) (Haemophilus somnus).